The sequence spans 299 residues: Prohibitin-2 (299 aa).

An N-acetylalanine modification is found at Ala2. The tract at residues 19–49 (MGTALKLLLGAGAVAYGIRESVFTVEGGHRA) is necessary for transcriptional repression. Tyr128 is subject to Phosphotyrosine. N6-acetyllysine is present on Lys147. Positions 150–174 (ASQLITQRAQVSLLIRRELTERAKD) are necessary for transcriptional repression. Ser151 is modified (phosphoserine). Residues 190-238 (SREYTAAVEAKQVAQQEAQRAQFLVEKAKQEQRQKIVQAEGEAEAARML) adopt a coiled-coil conformation. 3 positions are modified to N6-acetyllysine: Lys200, Lys250, and Lys262.

The protein belongs to the prohibitin family. The mitochondrial prohibitin complex consists of two subunits (PHB1 and PHB2), assembled into a membrane-associated ring-shaped supercomplex of approximately 1 mDa. Interacts with ESR1, HDAC1 and HDAC5. Interacts with ZNF703. Interacts with STOML2. Interacts with ARFGEF3. Interacts with SPHK2. Interacts with COX4I1; the interaction associates PHB2 with COX. Interacts with MAP1LC3B (membrane-bound form LC3-II); the interaction is direct and upon mitochondrial depolarization and proteasome-dependent outer membrane rupture. Interacts with IGFBP6 (via C-terminal domain). Interacts with CLPB. Interacts with CD86 (via cytoplasmic domain); the interactions increases after priming with CD40. Interacts with AFG3L2. Interacts with DNAJC19. Interacts with AKT2; this interaction may be important for myogenic differentiation. Post-translationally, phosphorylated. Tyrosine phosphorylation is indirectly stimulated by IGFBP6.

Its subcellular location is the mitochondrion inner membrane. The protein localises to the cytoplasm. It is found in the nucleus. It localises to the cell membrane. Protein with pleiotropic attributes mediated in a cell-compartment- and tissue-specific manner, which include the plasma membrane-associated cell signaling functions, mitochondrial chaperone, and transcriptional co-regulator of transcription factors and sex steroid hormones in the nucleus. Functionally, in the mitochondria, together with PHB, forms large ring complexes (prohibitin complexes) in the inner mitochondrial membrane (IMM) and functions as a chaperone protein that stabilizes mitochondrial respiratory enzymes and maintains mitochondrial integrity in the IMM, which is required for mitochondrial morphogenesis, neuronal survival, and normal lifespan. The prohibitin complex, with DNAJC19, regulates cardiolipin remodeling and the protein turnover of OMA1 in a cardiolipin-binding manner. Also regulates cytochrome-c oxidase assembly (COX) and mitochondrial respiration. Binding to sphingoid 1-phosphate (SPP) modulates its regulator activity. Has a key role of mitophagy receptor involved in targeting mitochondria for autophagic degradation. Involved in mitochondrial-mediated antiviral innate immunity, activates RIG-I-mediated signal transduction and production of IFNB1 and pro-inflammatory cytokine IL6. Its function is as follows. In the nucleus, serves as transcriptional co-regulator. Acts as a mediator of transcriptional repression by nuclear hormone receptors via recruitment of histone deacetylases. Functions as an estrogen receptor (ER)-selective coregulator that potentiates the inhibitory activities of antiestrogens and represses the activity of estrogens. Competes with NCOA1 for modulation of ER transcriptional activity. In terms of biological role, in the plasma membrane, is involved in IGFBP6-induced cell migration. Cooperates with CD86 to mediate CD86-signaling in B lymphocytes that regulates the level of IgG1 produced through the activation of distal signaling intermediates. Upon CD40 engagement, required to activate NF-kappa-B signaling pathway via phospholipase C and protein kinase C activation. This chain is Prohibitin-2 (PHB2), found in Bos taurus (Bovine).